Reading from the N-terminus, the 489-residue chain is Rhamnulokinase (489 aa).

13 to 17 (ASSGR) contributes to the ATP binding site. An intrachain disulfide couples Cys-68 to Cys-222. Residues Gly-83 and 236 to 238 (HDT) contribute to the substrate site. The Proton acceptor role is filled by Asp-237. Residue Thr-259 coordinates ATP. Residue Asn-296 coordinates substrate. Gln-304 contributes to the ATP binding site. Residues Cys-353 and Cys-370 are joined by a disulfide bond. Gly-402 contributes to the ATP binding site. Cysteines 413 and 417 form a disulfide.

The protein belongs to the rhamnulokinase family. The cofactor is Mg(2+).

The catalysed reaction is L-rhamnulose + ATP = L-rhamnulose 1-phosphate + ADP + H(+). It participates in carbohydrate degradation; L-rhamnose degradation; glycerone phosphate from L-rhamnose: step 2/3. Involved in the catabolism of L-rhamnose (6-deoxy-L-mannose). Catalyzes the transfer of the gamma-phosphate group from ATP to the 1-hydroxyl group of L-rhamnulose to yield L-rhamnulose 1-phosphate. This chain is Rhamnulokinase, found in Salmonella typhi.